We begin with the raw amino-acid sequence, 213 residues long: Embryo-specific protein ATS3 (213 aa).

An N-terminal signal peptide occupies residues 1 to 21 (MTFPSLSVSFLFFAFIFVTHA). Positions 34-148 (CPYTVVVMTS…LNTWYGHNNC (115 aa)) constitute a PLAT domain. The segment at 147–188 (NCNTTGRPSSPDLPPPHFPPEFPPETPTTPPPPPPRPSAASR) is disordered. The N-linked (GlcNAc...) asparagine glycan is linked to asparagine 149. Positions 157-183 (PDLPPPHFPPEFPPETPTTPPPPPPRP) are enriched in pro residues.

In terms of tissue distribution, expressed in seeds. Expression is restricted to the developing embryo.

It localises to the secreted. Functionally, may play a role during embryo development. This chain is Embryo-specific protein ATS3, found in Arabidopsis thaliana (Mouse-ear cress).